Reading from the N-terminus, the 377-residue chain is Chaperone protein DnaJ (377 aa).

One can recognise a J domain in the interval 5–70; the sequence is DYYEILGVER…EKRAAYDQYG (66 aa). The segment at 134–212 adopts a CR-type zinc-finger fold; sequence GITKDIQIQT…CHGDGRVHKT (79 aa). Residues Cys147, Cys150, Cys164, Cys167, Cys186, Cys189, Cys200, and Cys203 each contribute to the Zn(2+) site. CXXCXGXG motif repeat units lie at residues 147-154, 164-171, 186-193, and 200-207; these read CDHCNGSG, CPTCHGHG, CPHCHGTG, and CKKCHGDG.

Belongs to the DnaJ family. Homodimer. The cofactor is Zn(2+).

The protein resides in the cytoplasm. Participates actively in the response to hyperosmotic and heat shock by preventing the aggregation of stress-denatured proteins and by disaggregating proteins, also in an autonomous, DnaK-independent fashion. Unfolded proteins bind initially to DnaJ; upon interaction with the DnaJ-bound protein, DnaK hydrolyzes its bound ATP, resulting in the formation of a stable complex. GrpE releases ADP from DnaK; ATP binding to DnaK triggers the release of the substrate protein, thus completing the reaction cycle. Several rounds of ATP-dependent interactions between DnaJ, DnaK and GrpE are required for fully efficient folding. Also involved, together with DnaK and GrpE, in the DNA replication of plasmids through activation of initiation proteins. This is Chaperone protein DnaJ from Actinobacillus succinogenes (strain ATCC 55618 / DSM 22257 / CCUG 43843 / 130Z).